The chain runs to 81 residues: uncharacterized protein (81 aa).

This is an uncharacterized protein from Sulfolobus islandicus filamentous virus (isolate Iceland/Hveragerdi) (SIFV).